Reading from the N-terminus, the 212-residue chain is Thymidylate kinase (212 aa).

10–17 is a binding site for ATP; the sequence is GPDGAGKS.

This sequence belongs to the thymidylate kinase family.

The catalysed reaction is dTMP + ATP = dTDP + ADP. Its function is as follows. Phosphorylation of dTMP to form dTDP in both de novo and salvage pathways of dTTP synthesis. The protein is Thymidylate kinase of Lactobacillus helveticus (strain DPC 4571).